We begin with the raw amino-acid sequence, 75 residues long: Beta-defensin 42 (75 aa).

Residues 1 to 21 (MNLRLSCLLFILVTSLPAGRC) form the signal peptide. Intrachain disulfides connect Cys-33–Cys-60, Cys-40–Cys-54, and Cys-44–Cys-61.

This sequence belongs to the beta-defensin family. As to expression, epididymis-specific, with highest levels in the initial segment and distal caput.

Its subcellular location is the secreted. In terms of biological role, has bactericidal activity. May play a role in the antimicrobial protection of sperm and urogenital tract epithelia. The polypeptide is Beta-defensin 42 (Mus musculus (Mouse)).